Here is a 429-residue protein sequence, read N- to C-terminus: D-amino acid dehydrogenase (429 aa).

3–17 (VLILGSGVIGTTTAW) lines the FAD pocket.

Belongs to the DadA oxidoreductase family. It depends on FAD as a cofactor.

It carries out the reaction a D-alpha-amino acid + A + H2O = a 2-oxocarboxylate + AH2 + NH4(+). It functions in the pathway amino-acid degradation; D-alanine degradation; NH(3) and pyruvate from D-alanine: step 1/1. In terms of biological role, oxidative deamination of D-amino acids. The protein is D-amino acid dehydrogenase of Xanthomonas campestris pv. campestris (strain B100).